Consider the following 745-residue polypeptide: Phosphoribosylformylglycinamidine synthase subunit PurL (745 aa).

The active site involves H47. The ATP site is built by Y50 and K90. E92 serves as a coordination point for Mg(2+). Substrate is bound by residues 93-96 and R115; that span reads SHNH. H94 acts as the Proton acceptor in catalysis. D116 contributes to the Mg(2+) binding site. Q240 is a substrate binding site. Position 268 (D268) interacts with Mg(2+). 312 to 314 contacts substrate; sequence ESQ. ATP is bound by residues N501 and G538. Residue N539 coordinates Mg(2+). Substrate is bound at residue S541.

This sequence belongs to the FGAMS family. In terms of assembly, monomer. Part of the FGAM synthase complex composed of 1 PurL, 1 PurQ and 2 PurS subunits.

The protein localises to the cytoplasm. The catalysed reaction is N(2)-formyl-N(1)-(5-phospho-beta-D-ribosyl)glycinamide + L-glutamine + ATP + H2O = 2-formamido-N(1)-(5-O-phospho-beta-D-ribosyl)acetamidine + L-glutamate + ADP + phosphate + H(+). It functions in the pathway purine metabolism; IMP biosynthesis via de novo pathway; 5-amino-1-(5-phospho-D-ribosyl)imidazole from N(2)-formyl-N(1)-(5-phospho-D-ribosyl)glycinamide: step 1/2. Its function is as follows. Part of the phosphoribosylformylglycinamidine synthase complex involved in the purines biosynthetic pathway. Catalyzes the ATP-dependent conversion of formylglycinamide ribonucleotide (FGAR) and glutamine to yield formylglycinamidine ribonucleotide (FGAM) and glutamate. The FGAM synthase complex is composed of three subunits. PurQ produces an ammonia molecule by converting glutamine to glutamate. PurL transfers the ammonia molecule to FGAR to form FGAM in an ATP-dependent manner. PurS interacts with PurQ and PurL and is thought to assist in the transfer of the ammonia molecule from PurQ to PurL. The polypeptide is Phosphoribosylformylglycinamidine synthase subunit PurL (Leptospira interrogans serogroup Icterohaemorrhagiae serovar copenhageni (strain Fiocruz L1-130)).